Reading from the N-terminus, the 402-residue chain is MQTLPSPVQATPTETAIVRRKTRPVPIGSVVIGGGHPVAVQSMINEDTLDIEGSVAAIRRLHEIGCEIVRVTVPSLAHAKAMEEIRDRLYKTYKPVPLVADVHHNGMKIALEVAKYVDNVRINPGLYVFEKPKPNRTEYTQAEFDEIGAKIRETLEPLVISLRDQGKSMRIGVNHGSLAERMLFTYGDTPEGMVESALEFIRICESLNFYNLEISLKASRVPVMIAANRLMVKRMDELGMDYPLHLGVTEAGDGEYGRIKSTAGIATLLAEGIGDTIRVSLTEAPEKEIPVCYGILQALGLRRTMVEYVACPSCGRTLFNLEEVLHKVREATKHLTGLNIAVMGCIVNGPGEMADADYGYVGKQPGYISLYRGREEVKKVPEAEGVAALVELIKADGRWVDP.

[4Fe-4S] cluster contacts are provided by Cys-311, Cys-314, Cys-345, and Glu-352.

Belongs to the IspG family. The cofactor is [4Fe-4S] cluster.

It carries out the reaction (2E)-4-hydroxy-3-methylbut-2-enyl diphosphate + 2 oxidized [2Fe-2S]-[ferredoxin] + H2O = 2-C-methyl-D-erythritol 2,4-cyclic diphosphate + 2 reduced [2Fe-2S]-[ferredoxin] + H(+). It participates in isoprenoid biosynthesis; isopentenyl diphosphate biosynthesis via DXP pathway; isopentenyl diphosphate from 1-deoxy-D-xylulose 5-phosphate: step 5/6. In terms of biological role, converts 2C-methyl-D-erythritol 2,4-cyclodiphosphate (ME-2,4cPP) into 1-hydroxy-2-methyl-2-(E)-butenyl 4-diphosphate, using ferredoxin I (PetF) as the reducing agent. This Thermosynechococcus vestitus (strain NIES-2133 / IAM M-273 / BP-1) protein is 4-hydroxy-3-methylbut-2-en-1-yl diphosphate synthase (ferredoxin).